The primary structure comprises 175 residues: Isopentenyl-diphosphate Delta-isomerase (175 aa).

H23 and H30 together coordinate Mn(2+). Residues 28 to 162 form the Nudix hydrolase domain; it reads TLHLAFCVFV…PLRYTPWFRR (135 aa). The active site involves C65. H67 contacts Mn(2+). A Mg(2+)-binding site is contributed by E85. E111 and E113 together coordinate Mn(2+). Residue E113 is part of the active site.

The protein belongs to the IPP isomerase type 1 family. It depends on Mg(2+) as a cofactor. Requires Mn(2+) as cofactor.

The protein resides in the cytoplasm. The enzyme catalyses isopentenyl diphosphate = dimethylallyl diphosphate. It functions in the pathway isoprenoid biosynthesis; dimethylallyl diphosphate biosynthesis; dimethylallyl diphosphate from isopentenyl diphosphate: step 1/1. Its function is as follows. Catalyzes the 1,3-allylic rearrangement of the homoallylic substrate isopentenyl (IPP) to its highly electrophilic allylic isomer, dimethylallyl diphosphate (DMAPP). This is Isopentenyl-diphosphate Delta-isomerase from Halorhodospira halophila (strain DSM 244 / SL1) (Ectothiorhodospira halophila (strain DSM 244 / SL1)).